Consider the following 165-residue polypeptide: Protein NKG7 (165 aa).

4 consecutive transmembrane segments (helical) span residues 9–29, 61–81, 92–112, and 133–153; these read LLGGSLGLMFCLIALSTDFWF, FSIMAVLWALVSVSFLVLSCF, LVSTTAAFAAAISMVVAMAVY, and FYLGWVSAILLLCTGALSLGA.

It belongs to the PMP-22/EMP/MP20 family. As to expression, expressed in activated T-cells, in kidney, liver, lung and pancreas. Not expressed in brain, heart, or skeletal muscle. Expressed at high levels in TCR gamma delta-expressing CTL clones, and in some TCR alpha beta-expressing CTL clones (both CD4+ and CD8+), but is not expressed in other TCR alpha beta-expressing CTL clones and in cell lines representing B-cells, monocytes, and myeloid cells.

The protein localises to the cell membrane. It localises to the cytolytic granule membrane. Its function is as follows. Regulates cytotoxic granule exocytosis in effector lymphocytes, thus acting as a critical mediator of inflammation in a broad range of infectious and non-infectious diseases. Essential for cytotoxic degranulation of natural killer (NK) cells and CD8(+) T-cells and for the activation of CD4(+) T-cells following infection. Plays a critical role in CD8(+) T-cell and NK cell-mediated cytolysis of target cells and contributes to the cytolytic activity via the perforin/granzyme pathway by enhancing exocytosis of LAMP1-carrying lytic granules. Contributes to NK cell-mediated control of cancer metastasis. This chain is Protein NKG7 (NKG7), found in Homo sapiens (Human).